The primary structure comprises 154 residues: RING finger protein 11 (154 aa).

Positions 1–12 (MGNCLKSPTSDD) are enriched in polar residues. Residues 1–53 (MGNCLKSPTSDDISLLHESQSDRASFGEGTEPDQEPPPPYQEQVPVPVYHPTP) are disordered. Gly-2 is lipidated: N-myristoyl glycine. A lipid anchor (S-palmitoyl cysteine) is attached at Cys-4. Phosphoserine is present on residues Ser-14 and Ser-25. Residues 37-40 (PPPY) carry the PPxY motif motif. Residues 41–51 (QEQVPVPVYHP) are compositionally biased toward low complexity. An RING-type zinc finger spans residues 99-140 (CVICMMDFVYGDPIRFLPCMHIYHLDCIDDWLMRSFTCPSCM). Phosphothreonine; by PKB/AKT1 is present on Thr-135.

As to quaternary structure, interacts (when phosphorylated) with 14-3-3. Interacts with the E3 ubiquitin-ligases NEDD4, ITCH, SMURF2 and WWP1. Also interacts with the E2 ubiquitin-conjugating enzymes UBE2D1 and UBE2N, but neither with CDC34, nor with UBE2L3. Interacts with ZNF350, EPS15 and STAMBP. After TNF stimulation, interacts with TAX1BP1, TNFAIP3 and RIPK1; these interactions are transient and they are lost after 1 hour of stimulation with TNF. Interacts with GGA1. In terms of processing, ubiquitinated in the presence of ITCH, SMURF2 and UBE2D1, as well as WWP1. Post-translationally, phosphorylation by PKB/AKT1 may accelerate degradation by the proteasome. Acylation at both Gly-2 and Cys-4 is required for proper localization to the endosomes.

The protein localises to the early endosome. The protein resides in the recycling endosome. Its subcellular location is the cytoplasm. It is found in the nucleus. Its function is as follows. Essential component of a ubiquitin-editing protein complex, comprising also TNFAIP3, ITCH and TAX1BP1, that ensures the transient nature of inflammatory signaling pathways. Promotes the association of TNFAIP3 to RIPK1 after TNF stimulation. TNFAIP3 deubiquitinates 'Lys-63' polyubiquitin chains on RIPK1 and catalyzes the formation of 'Lys-48'-polyubiquitin chains. This leads to RIPK1 proteasomal degradation and consequently termination of the TNF- or LPS-mediated activation of NF-kappa-B. Recruits STAMBP to the E3 ubiquitin-ligase SMURF2 for ubiquitination, leading to its degradation by the 26S proteasome. The polypeptide is RING finger protein 11 (RNF11) (Bos taurus (Bovine)).